The chain runs to 370 residues: MQQDKVNLLGLNQKAIEDFFISIGEKKFHARQVFKWIHKKGVIDFDAMTDLGKNLRHKLKEKAQITIPKVVFSKASKDGTHKWLIDVGGSAVETVFILEEGRGTLCVSSQVGCTLNCSFCSTGKQGFNRNLSAAEVIAQLWIAARTLSKTDGEHDFTVTNIVMMGMGEPLMNFENVVPAMDIMMDDLAYGLSRRKVTLSTSGVVPRIYDLLEQSGVSLAVSLHAPNDMLRNEIVPINKKYNIDELLEACKLYAQKGPHKHITFEYTLMEEVNDNLSDAEELVALLKSREVPAKINLIPFNPYPGTPYKKPSNNRIHRFKEFLQHNGFVTTVRKTRGDDIDAACGQLAGDVMDKTNRKQRYLKKLGDTNAN.

Glutamate 93 (proton acceptor) is an active-site residue. In terms of domain architecture, Radical SAM core spans 99–337 (EEGRGTLCVS…VTTVRKTRGD (239 aa)). Residues cysteine 106 and cysteine 343 are joined by a disulfide bond. Residues cysteine 113, cysteine 117, and cysteine 120 each coordinate [4Fe-4S] cluster. Residues 167 to 168 (GE), serine 199, 221 to 223 (SLH), and asparagine 300 contribute to the S-adenosyl-L-methionine site. The active-site S-methylcysteine intermediate is the cysteine 343.

The protein belongs to the radical SAM superfamily. RlmN family. The cofactor is [4Fe-4S] cluster.

It is found in the cytoplasm. The enzyme catalyses adenosine(2503) in 23S rRNA + 2 reduced [2Fe-2S]-[ferredoxin] + 2 S-adenosyl-L-methionine = 2-methyladenosine(2503) in 23S rRNA + 5'-deoxyadenosine + L-methionine + 2 oxidized [2Fe-2S]-[ferredoxin] + S-adenosyl-L-homocysteine. It carries out the reaction adenosine(37) in tRNA + 2 reduced [2Fe-2S]-[ferredoxin] + 2 S-adenosyl-L-methionine = 2-methyladenosine(37) in tRNA + 5'-deoxyadenosine + L-methionine + 2 oxidized [2Fe-2S]-[ferredoxin] + S-adenosyl-L-homocysteine. Functionally, specifically methylates position 2 of adenine 2503 in 23S rRNA and position 2 of adenine 37 in tRNAs. m2A2503 modification seems to play a crucial role in the proofreading step occurring at the peptidyl transferase center and thus would serve to optimize ribosomal fidelity. The chain is Dual-specificity RNA methyltransferase RlmN from Francisella tularensis subsp. tularensis (strain WY96-3418).